The chain runs to 678 residues: MSGMIIRTPTRTKTKSFNGKQMDFTFPSPVRGSVDEHSLDNHRIVNETLSLKPQEDIEVSSQMLSDYTSSASNANTYSGNSSNGYYSFANISDNTTASPKLHNHNNMVSPILENTESSFQLQTVESLDPQRQRIRSTYEYGHMGSNQNLRQTREKSKTAESISTTIAQQTIPTADNISFDFSDISGYEDAVSNKSENKNHKPQNSVVKNQLRATSRAAISTNDSPSLSNVYMSSLINSSLESTRKTSTASSSVRSSRSSLKRSNAVRCKGGLLQYFTKLGIKIRKNCNKLRLVMRRKLFRFKKNSKSFSRSNSIRSGLEISKLPKVRHEKKLRQESSSIAPHTLHQKRTHGFNNKLHKSMSLKSLQPALVSETVPEINNNLHDILESKEKTADVPAATKTMKTTPSLRRTPSSIRRAASILTSNVATPKASANNRNSMIEYDTVENSRISSRNSSIKSKGRLVRSSGSVGLSSIARQPSIVVKNKVIPLSMSRFSIKEEIKEEEEESEESTSDYYVETEPVEAAPRTLAGPKSYAPENFRYGANVDDIKTLYKHYLSTVISRRIKMRLEMAQGEHSATNEPALTHQSTASLKDPIASVLTEYDSEGSEGTNLFDDEDDSSASEEDDEVVLPPLKGHNSTMSFVVQSPFTRQNSMASSSALLYLPVKRSLTLPIGMKIT.

5 disordered regions span residues 1-35, 138-167, 190-210, 242-261, and 602-632; these read MSGM…GSVD, YEYG…TTIA, AVSN…VKNQ, STRK…SSLK, and YDSE…VLPP. A compositionally biased stretch (polar residues) spans 9-19; it reads PTRTKTKSFNG. The span at 245 to 261 shows a compositional bias: low complexity; it reads KTSTASSSVRSSRSSLK. The span at 613-628 shows a compositional bias: acidic residues; it reads FDDEDDSSASEEDDEV.

This sequence belongs to the AIM44 family.

The protein localises to the bud neck. The sequence is that of Altered inheritance of mitochondria protein 44 (AIM44) from Candida glabrata (strain ATCC 2001 / BCRC 20586 / JCM 3761 / NBRC 0622 / NRRL Y-65 / CBS 138) (Yeast).